A 219-amino-acid chain; its full sequence is ATP-dependent dethiobiotin synthetase BioD (219 aa).

12–17 (DLGKTH) contacts ATP. Thr-16 contacts Mg(2+). The active site involves Lys-37. Residue Ser-41 coordinates substrate. ATP-binding positions include Asp-52, 115–118 (EGAG), and 175–176 (SE). Residues Asp-52 and Glu-115 each coordinate Mg(2+).

This sequence belongs to the dethiobiotin synthetase family. As to quaternary structure, homodimer. It depends on Mg(2+) as a cofactor.

The protein resides in the cytoplasm. It catalyses the reaction (7R,8S)-7,8-diammoniononanoate + CO2 + ATP = (4R,5S)-dethiobiotin + ADP + phosphate + 3 H(+). Its pathway is cofactor biosynthesis; biotin biosynthesis; biotin from 7,8-diaminononanoate: step 1/2. Functionally, catalyzes a mechanistically unusual reaction, the ATP-dependent insertion of CO2 between the N7 and N8 nitrogen atoms of 7,8-diaminopelargonic acid (DAPA, also called 7,8-diammoniononanoate) to form a ureido ring. The polypeptide is ATP-dependent dethiobiotin synthetase BioD (Caulobacter vibrioides (strain ATCC 19089 / CIP 103742 / CB 15) (Caulobacter crescentus)).